The chain runs to 2057 residues: Protein TIC 214 (2057 aa).

The next 4 helical transmembrane spans lie at 13-33 (KIIN…AFSI), 62-82 (LIMG…HIAL), 158-178 (LFVT…CEFF), and 206-226 (SDYF…HSFG). Residues 248-340 (LILKGTDEEE…RVIQEKERKS (93 aa)) are a coiled coil. Residues 288–302 (NHLKKKKDRQKKQGT) show a composition bias toward basic residues. Disordered regions lie at residues 288-316 (NHLK…NSNT), 614-807 (ETHT…EEKG), 890-910 (DEQT…NDRV), 1597-1634 (EEEE…TNND), and 1724-1817 (KKKN…KSLS). Basic and acidic residues-rich tracts occupy residues 621-657 (ATDK…KETK) and 665-702 (NTVD…KETK). Residues 704 to 713 (NASKETNTVN) are compositionally biased toward polar residues. Composition is skewed to basic and acidic residues over residues 714 to 807 (KETK…EEKG) and 891 to 900 (EQTKREEKPK). The span at 1597-1619 (EEEEINPEEEINPEEEINPEEEI) shows a compositional bias: acidic residues. Residues 1622–1634 (SSNQKTPIGTNND) are compositionally biased toward polar residues. Residues 1753-1817 (TNSEKKSKTN…ETDSEKKSLS (65 aa)) are compositionally biased toward basic and acidic residues.

It belongs to the TIC214 family. In terms of assembly, part of the Tic complex.

The protein resides in the plastid. It is found in the chloroplast inner membrane. Functionally, involved in protein precursor import into chloroplasts. May be part of an intermediate translocation complex acting as a protein-conducting channel at the inner envelope. The sequence is that of Protein TIC 214 from Ipomoea purpurea (Common morning glory).